Reading from the N-terminus, the 342-residue chain is GTPase Obg (342 aa).

Positions 1-159 (MKFLDEAKVY…HWLWLRLKLI (159 aa)) constitute an Obg domain. The OBG-type G domain maps to 160–327 (ADAGLVGLPN…ALRALMAAMD (168 aa)). GTP-binding positions include 166 to 173 (GLPNAGKS), 191 to 195 (FTTLH), 212 to 215 (DIPG), 279 to 282 (SKAD), and 308 to 310 (SAA). Ser173 and Thr193 together coordinate Mg(2+).

This sequence belongs to the TRAFAC class OBG-HflX-like GTPase superfamily. OBG GTPase family. Monomer. It depends on Mg(2+) as a cofactor.

The protein resides in the cytoplasm. Its function is as follows. An essential GTPase which binds GTP, GDP and possibly (p)ppGpp with moderate affinity, with high nucleotide exchange rates and a fairly low GTP hydrolysis rate. Plays a role in control of the cell cycle, stress response, ribosome biogenesis and in those bacteria that undergo differentiation, in morphogenesis control. In Methylobacterium nodulans (strain LMG 21967 / CNCM I-2342 / ORS 2060), this protein is GTPase Obg.